We begin with the raw amino-acid sequence, 2803 residues long: Microtubule-associated protein 1A (2803 aa).

Ser114, Ser117, Ser118, Ser121, and Ser155 each carry phosphoserine. Tyr177 is subject to Phosphotyrosine. Disordered stretches follow at residues 302–466 and 486–516; these read GAVP…DLKP and IDRS…PLPT. 3 positions are modified to phosphoserine: Ser319, Ser322, and Ser384. Positions 335 to 390 are enriched in basic and acidic residues; the sequence is AKREEVVEEGAKEARSELAKELAKTEKKAKESSEKPPEKPAKPERVKTESSEALKA. The span at 391 to 406 shows a compositional bias: basic residues; it reads EKRKLIKDKVGKKHLK. Basic and acidic residues-rich tracts occupy residues 407–464 and 486–499; these read EKIS…KPDL and IDRS…KELS. 8 tandem repeats follow at residues 415-417, 420-422, 427-429, 431-433, 436-438, 440-442, 444-446, and 449-451. The 9 X 3 AA repeats of K-K-[DE] stretch occupies residues 415 to 541; it reads KKDKEKKEIK…TQDFEEMKRE (127 aa). Thr504 is subject to Phosphothreonine. A phosphoserine mark is found at Ser526 and Ser527. Residues 539–541 form repeat 9; that stretch reads KRE. 2 stretches are compositionally biased toward basic and acidic residues: residues 539–554 and 585–596; these read KREE…DTGL and QEEHVMKEKELV. Disordered stretches follow at residues 539 to 712, 734 to 806, 847 to 1080, 1109 to 1548, and 1573 to 1605; these read KREE…KAPE, YIQD…GTPE, EDQS…VNID, TGPI…EKKD, and EENH…EKVK. A phosphoserine mark is found at Ser605 and Ser612. At Thr616 the chain carries Phosphothreonine. Over residues 623-667 the composition is skewed to basic and acidic residues; sequence WEEKKQREAERLPDRTEAREESEPEVKEDVIEKAELEEMEEVHPS. Phosphoserine is present on residues Ser644, Ser667, and Ser787. 2 stretches are compositionally biased toward polar residues: residues 847 to 860 and 871 to 883; these read EDQS…PQTE and TVTS…TEAT. A phosphoserine mark is found at Ser874, Ser877, Ser878, and Ser891. Position 894 is a phosphothreonine (Thr894). 9 positions are modified to phosphoserine: Ser896, Ser900, Ser909, Ser986, Ser996, Ser1004, Ser1013, Ser1019, and Ser1029. A compositionally biased stretch (basic and acidic residues) spans 1031 to 1065; it reads GDTKRTPGVGKEDAAEETVKPGPEEGTLEKEEKVP. Ser1069, Ser1144, Ser1146, Ser1160, Ser1172, Ser1190, Ser1200, Ser1203, Ser1209, Ser1218, Ser1221, and Ser1264 each carry phosphoserine. Residues 1131–1146 are compositionally biased toward basic and acidic residues; sequence KPQKDEVLRYPDRSLS. Residues 1154-1169 show a composition bias toward polar residues; sequence SVLSVPSPDTANQEPT. Polar residues-rich tracts occupy residues 1211–1224 and 1264–1278; these read DVSS…SLGT and SPPT…AQTD. Low complexity predominate over residues 1289 to 1299; the sequence is PASSFSHSTPS. A phosphoserine mark is found at Ser1326, Ser1329, Ser1544, Ser1600, and Ser1626. 2 stretches are compositionally biased toward basic and acidic residues: residues 1338-1548 and 1586-1605; these read IAIK…EKKD and QEDK…EKVK. Basic and acidic residues predominate over residues 1632–1642; it reads RAREQEEKYWR. Disordered stretches follow at residues 1632 to 1684, 1713 to 1879, and 1892 to 2673; these read RARE…RYWR, DGQG…FSWG, and EGAA…LVNG. Ser1654 is subject to Phosphoserine. Residues 1655 to 1666 show a composition bias toward basic and acidic residues; sequence PTREEPAGEQKE. 9 positions are modified to phosphoserine: Ser1675, Ser1749, Ser1762, Ser1776, Ser1791, Ser1797, Ser1801, Ser1812, and Ser1818. Residues 1852–1867 are compositionally biased toward pro residues; the sequence is LPPAPLSPAPGPPTPA. Basic and acidic residues predominate over residues 1907–1929; sequence KDYRKAEGEREEEGRAEAPDKSS. The residue at position 1931 (Ser1931) is a Phosphoserine. The span at 1951-1964 shows a compositional bias: basic and acidic residues; the sequence is PEQREPTPYPDERS. Thr1957 carries the phosphothreonine modification. Residues 2019–2033 are compositionally biased toward polar residues; the sequence is SPISPKSLQSDTPTF. The residue at position 2022 (Ser2022) is a Phosphoserine. A compositionally biased stretch (pro residues) spans 2042–2066; sequence TVPPRPEPGPSMEPSLTPPAVPPRA. Thr2058 is subject to Phosphothreonine. A phosphoserine mark is found at Ser2074, Ser2104, Ser2106, and Ser2108. Positions 2086–2122 are enriched in basic and acidic residues; the sequence is PDRRSPSPKESGRSHWDDSTSDSELEKGAREQPEKEA. Residues 2175 to 2184 show a composition bias toward pro residues; sequence PAPPQLPSPA. Phosphoserine occurs at positions 2235, 2252, 2256, 2259, and 2260. Polar residues predominate over residues 2257-2268; the sequence is EGSSSEATTPVI. The span at 2312–2325 shows a compositional bias: low complexity; that stretch reads ASLDLALAPAPSLP. Ser2449 carries the phosphoserine modification. Over residues 2461–2473 the composition is skewed to basic and acidic residues; it reads IDDRDLSTEEVRL. Over residues 2502 to 2514 the composition is skewed to low complexity; the sequence is SASDSGSSQSDSD. Over residues 2559-2575 the composition is skewed to pro residues; it reads DPPPLPQPDPRPSPPRP. Over residues 2590-2602 the composition is skewed to basic and acidic residues; the sequence is GRVERLREKEKVQ. Phosphoserine is present on residues Ser2649 and Ser2664.

It belongs to the MAP1 family. As to quaternary structure, 3 different light chains, LC1 (a cleavage product of MAP1B), LC2 (a cleavage product of MAP1A) and LC3 (produced by one of the MAP1LC3 genes), can associate with the MAP1A or MAP1B heavy chains. Interacts with TIAM2. Interacts with guanylate kinase-like domain of DLG1, DLG2 and DLG4. Binds to CSNK1D. Interacts with ELAVL4. Post-translationally, phosphorylated by CSNK1D. LC2 is generated from MAP1A by proteolytic processing. In terms of tissue distribution, brain.

It is found in the cytoplasm. Its subcellular location is the cytoskeleton. Structural protein involved in the filamentous cross-bridging between microtubules and other skeletal elements. The protein is Microtubule-associated protein 1A (MAP1A) of Homo sapiens (Human).